The following is a 255-amino-acid chain: tRNA (guanine-N(1)-)-methyltransferase (255 aa).

S-adenosyl-L-methionine-binding positions include glycine 113 and isoleucine 133–leucine 138.

This sequence belongs to the RNA methyltransferase TrmD family. In terms of assembly, homodimer.

The protein resides in the cytoplasm. The catalysed reaction is guanosine(37) in tRNA + S-adenosyl-L-methionine = N(1)-methylguanosine(37) in tRNA + S-adenosyl-L-homocysteine + H(+). Functionally, specifically methylates guanosine-37 in various tRNAs. The polypeptide is tRNA (guanine-N(1)-)-methyltransferase (Shigella flexneri serotype 5b (strain 8401)).